Consider the following 211-residue polypeptide: ATP-dependent Clp protease proteolytic subunit 2 (211 aa).

The active-site Nucleophile is the Ser-106. The active site involves His-131.

The protein belongs to the peptidase S14 family. In terms of assembly, fourteen ClpP subunits assemble into 2 heptameric rings which stack back to back to give a disk-like structure with a central cavity, resembling the structure of eukaryotic proteasomes.

The protein localises to the cytoplasm. It catalyses the reaction Hydrolysis of proteins to small peptides in the presence of ATP and magnesium. alpha-casein is the usual test substrate. In the absence of ATP, only oligopeptides shorter than five residues are hydrolyzed (such as succinyl-Leu-Tyr-|-NHMec, and Leu-Tyr-Leu-|-Tyr-Trp, in which cleavage of the -Tyr-|-Leu- and -Tyr-|-Trp bonds also occurs).. In terms of biological role, cleaves peptides in various proteins in a process that requires ATP hydrolysis. Has a chymotrypsin-like activity. Plays a major role in the degradation of misfolded proteins. The protein is ATP-dependent Clp protease proteolytic subunit 2 of Bradyrhizobium diazoefficiens (strain JCM 10833 / BCRC 13528 / IAM 13628 / NBRC 14792 / USDA 110).